Consider the following 855-residue polypeptide: Valine--tRNA ligase (855 aa).

Positions proline 44–asparagine 54 match the 'HIGH' region motif. Residues lysine 522–serine 526 carry the 'KMSKS' region motif. ATP is bound at residue lysine 525.

It belongs to the class-I aminoacyl-tRNA synthetase family. ValS type 2 subfamily.

It is found in the cytoplasm. It carries out the reaction tRNA(Val) + L-valine + ATP = L-valyl-tRNA(Val) + AMP + diphosphate. Catalyzes the attachment of valine to tRNA(Val). As ValRS can inadvertently accommodate and process structurally similar amino acids such as threonine, to avoid such errors, it has a 'posttransfer' editing activity that hydrolyzes mischarged Thr-tRNA(Val) in a tRNA-dependent manner. This chain is Valine--tRNA ligase, found in Methanothrix thermoacetophila (strain DSM 6194 / JCM 14653 / NBRC 101360 / PT) (Methanosaeta thermophila).